The sequence spans 115 residues: MADLVDKPRSELSEIELARLEEYEFSAGPLSVLQQAVKNHDQVLINCRNNKKLLARVKAFDRHSNMVLENVKEMWTEKKRTASGKKGKAINKDRFISKMFLRGDGVVLVVRIPSA.

Residues 30–115 (LSVLQQAVKN…VVLVVRIPSA (86 aa)) form the Sm domain.

This sequence belongs to the snRNP core protein family. In terms of assembly, belongs to the 40S cdc5-associated complex (or cwf complex), a spliceosome sub-complex reminiscent of a late-stage spliceosome composed of the U2, U5 and U6 snRNAs and at least brr2, cdc5, cwf2/prp3, cwf3/syf1, cwf4/syf3, cwf5/ecm2, spp42/cwf6, cwf7/spf27, cwf8, cwf9, cwf10, cwf11, cwf12, prp45/cwf13, cwf14, cwf15, cwf16, cwf17, cwf18, cwf19, cwf20, cwf21, cwf22, cwf23, cwf24, cwf25, cwf26, cyp7/cwf27, cwf28, cwf29/ist3, lea1, msl1, prp5/cwf1, prp10, prp12/sap130, prp17, prp22, sap61, sap62, sap114, sap145, slu7, smb1, smd1, smd3, smf1, smg1 and syf2.

Its subcellular location is the nucleus. It is found in the cytoplasm. The protein localises to the cytosol. Functionally, plays a role in pre-mRNA splicing as a core component of the spliceosomal U1, U2, U4 and U5 small nuclear ribonucleoproteins (snRNPs), the building blocks of the spliceosome. The chain is Small nuclear ribonucleoprotein Sm D2 (smd2) from Schizosaccharomyces pombe (strain 972 / ATCC 24843) (Fission yeast).